Reading from the N-terminus, the 309-residue chain is Protein FdhE (309 aa).

The protein belongs to the FdhE family.

It localises to the cytoplasm. In terms of biological role, necessary for formate dehydrogenase activity. This chain is Protein FdhE, found in Escherichia coli O139:H28 (strain E24377A / ETEC).